Reading from the N-terminus, the 165-residue chain is AP-3 complex subunit sigma (165 aa).

The protein belongs to the adaptor complexes small subunit family. In terms of assembly, adaptor protein complex 3 (AP-3) is a heterotetramer composed of 2 large adaptins (apl5 and apl6), a medium adaptin (apm3) and a small adaptin (aps3).

The protein resides in the golgi apparatus. It localises to the cytoplasmic vesicle membrane. In terms of biological role, part of the AP-3 complex, an adaptor-related complex which is not clathrin-associated. The complex is associated with the Golgi region as well as more peripheral structures. It facilitates the budding of vesicles from the Golgi membrane and may be directly involved in trafficking to the vacuole. In Schizosaccharomyces pombe (strain 972 / ATCC 24843) (Fission yeast), this protein is AP-3 complex subunit sigma (aps3).